Consider the following 255-residue polypeptide: MTRTNDASGGGKLPRKRFYRARAHSNPLSDSHFPVPISPEEVDLSQHYPRYFPADKGSDGEEAAAPQQIRFADVGCGFGGLLVGLSPLFPDTLMIGMELRDKVTEYVKERILALRGANPGQYDNISVVRTNSMKYIPNYFRKAQLTKMFFLFPDPHFKEKNHRRRVISMQLLDEYAYVMEVGGIIYTITDVEELGEWMRSCLEKHPLFETVPEEEIKADPVFKLLSTATEESQKVARNGGQTFYAIFRRISLQEE.

The segment at 1–35 (MTRTNDASGGGKLPRKRFYRARAHSNPLSDSHFPV) is disordered. Residues 13–23 (LPRKRFYRARA) show a composition bias toward basic residues. Residues G75, 98–99 (EL), 131–132 (NS), and L151 contribute to the S-adenosyl-L-methionine site. Residue D154 is part of the active site. Residue 229–231 (TEE) participates in S-adenosyl-L-methionine binding.

The protein belongs to the class I-like SAM-binding methyltransferase superfamily. TrmB family.

It localises to the nucleus. It carries out the reaction guanosine(46) in tRNA + S-adenosyl-L-methionine = N(7)-methylguanosine(46) in tRNA + S-adenosyl-L-homocysteine. It participates in tRNA modification; N(7)-methylguanine-tRNA biosynthesis. Functionally, catalyzes the formation of N(7)-methylguanine at position 46 (m7G46) in tRNA. The sequence is that of tRNA (guanine-N(7)-)-methyltransferase from Zea mays (Maize).